Here is a 343-residue protein sequence, read N- to C-terminus: Stimulator of interferon genes protein homolog (343 aa).

N-linked (GlcNAc...) asparagine glycosylation is present at N84. 2 helical membrane-spanning segments follow: residues 87-107 (IYLIVGFLLVAFFRISVTGNY) and 109-129 (NVMPTTLFLFQMPLYWIWSFT). N157 contacts 3',2'-cGAMP. A glycan (N-linked (GlcNAc...) asparagine) is linked at N187. A helical membrane pass occupies residues 195-215 (LVILIPDEMFVNGVLESHLLD). 3',2'-cGAMP-binding residues include R232, K235, E255, T258, and S262. 2 N-linked (GlcNAc...) asparagine glycosylation sites follow: N270 and N333.

Belongs to the STING family.

Its subcellular location is the endoplasmic reticulum membrane. Functionally, facilitator of innate immune signaling that binds cyclic dinucleotides produced in response to infection by bacteria and/or viruses, and promotes the activation of the NF-kappa-B transcription factor Rel (Relish). Recognizes and binds cyclic di-GMP (c-di-GMP), a cyclic dinucleotide messenger produced by bacteria such as L.monocytogenes, leading to activation of the peptidoglycan recognition protein (IMD) signaling pathway and activation of Rel (Relish). Innate immune response is triggered in response to double-stranded RNA from viruses delivered to the cytoplasm: Sting acts by specifically binding cyclic dinucleotides 3',2'-cGAMP and 2',3'-cGAMP produced by cGlr1 and cGlr2 in response to RNA virus in the cytosol. Has a strong preference for 3',2'-cGAMP compared to other cyclic dinucleotides such as 2',3'-cGAMP or 3'3'-c-di-GMP. Upon binding to 3',2'-cGAMP, activates an antiviral immune response, leading to the activation of Rel (Relish). Activated in brain in response to Zika virus infection, leading to autophagy. This Drosophila melanogaster (Fruit fly) protein is Stimulator of interferon genes protein homolog.